Consider the following 637-residue polypeptide: Protein kinase domain-containing protein ppk3 (637 aa).

Positions 1–296 constitute a Protein kinase domain; sequence MDFIKSAASF…QLLSSKLEVI (296 aa). An HEAT repeat occupies 414 to 450; it reads KTLNNELLRSLAVVQNDQHPTLRTNSTICLGKIAEYL. The segment covering 576–586 has biased composition (basic and acidic residues); that stretch reads NDTTEIKEKKN. The disordered stretch occupies residues 576 to 637; it reads NDTTEIKEKK…ENNVEESWGL (62 aa). A compositionally biased stretch (acidic residues) spans 608-631; that stretch reads ETEEQIDESWMENWNDEEETENNV.

The protein resides in the golgi apparatus. The chain is Protein kinase domain-containing protein ppk3 (ppk3) from Schizosaccharomyces pombe (strain 972 / ATCC 24843) (Fission yeast).